The sequence spans 447 residues: Na(+)-translocating NADH-quinone reductase subunit A (447 aa).

It belongs to the NqrA family. Composed of six subunits; NqrA, NqrB, NqrC, NqrD, NqrE and NqrF.

The catalysed reaction is a ubiquinone + n Na(+)(in) + NADH + H(+) = a ubiquinol + n Na(+)(out) + NAD(+). In terms of biological role, NQR complex catalyzes the reduction of ubiquinone-1 to ubiquinol by two successive reactions, coupled with the transport of Na(+) ions from the cytoplasm to the periplasm. NqrA to NqrE are probably involved in the second step, the conversion of ubisemiquinone to ubiquinol. This chain is Na(+)-translocating NADH-quinone reductase subunit A, found in Yersinia pestis.